Reading from the N-terminus, the 1393-residue chain is DNA-directed RNA polymerase subunit beta' (1393 aa).

Residues C72, C74, C87, and C90 each coordinate Zn(2+). Mg(2+) contacts are provided by D463, D465, and D467. Zn(2+) is bound by residues C812, C887, C894, and C897.

The protein belongs to the RNA polymerase beta' chain family. In terms of assembly, the RNAP catalytic core consists of 2 alpha, 1 beta, 1 beta' and 1 omega subunit. When a sigma factor is associated with the core the holoenzyme is formed, which can initiate transcription. Requires Mg(2+) as cofactor. Zn(2+) is required as a cofactor.

The catalysed reaction is RNA(n) + a ribonucleoside 5'-triphosphate = RNA(n+1) + diphosphate. Functionally, DNA-dependent RNA polymerase catalyzes the transcription of DNA into RNA using the four ribonucleoside triphosphates as substrates. This chain is DNA-directed RNA polymerase subunit beta', found in Chlamydia caviae (strain ATCC VR-813 / DSM 19441 / 03DC25 / GPIC) (Chlamydophila caviae).